The primary structure comprises 312 residues: Porphobilinogen deaminase (312 aa).

Cysteine 243 bears the S-(dipyrrolylmethanemethyl)cysteine mark.

Belongs to the HMBS family. Monomer. Dipyrromethane is required as a cofactor.

The catalysed reaction is 4 porphobilinogen + H2O = hydroxymethylbilane + 4 NH4(+). Its pathway is porphyrin-containing compound metabolism; protoporphyrin-IX biosynthesis; coproporphyrinogen-III from 5-aminolevulinate: step 2/4. Its function is as follows. Tetrapolymerization of the monopyrrole PBG into the hydroxymethylbilane pre-uroporphyrinogen in several discrete steps. The chain is Porphobilinogen deaminase from Vibrio vulnificus (strain CMCP6).